The chain runs to 545 residues: MRPFSGSDCLKPVTEGINRAFGAKEPWQVATITATTVLGGVWLWTVICQDENLYIRGKRQFFKFAKKIPAVRRQVETELAKAKNDFETEIKKSNAHLTYSETLPEKGLSKEEILRLVDEHLKTGHYNWRDGRVSGAVYGYKPDLVELVTEVYGKASYTNPLHADLFPGVCKMEAEVVRMACNLFHGNSASCGTMTTGGTESIVMAMKAYRDFAREYKGITRPNIVVPKTVHAAFDKGGQYFNIHVRSVDVDPETYEVDIKKFKRAINRNTILLVGSAPNFPYGTIDDIEAIAALGVKYDIPVHVDACLGSFVVALVRNAGYKLRPFDFEVKGVTSISADTHKYGFAPKGSSVILYSDKKYKDHQFTVTTDWPGGVYGSPTVNGSRAGGIIAACWATMMSFGYDGYLEATKRIVDTARYIERGVRDIDGIFIFGKPATSVIALGSNVFDIFRLSDSLCKLGWNLNALQFPSGIHLCVTDMHTQPGVADKFIADVRSCTAEIMKDPGQPVVGKMALYGMAQSIPDRSVIGEVTRLFLHSMYYTPSQK.

Topologically, residues 1–26 are lumenal; the sequence is MRPFSGSDCLKPVTEGINRAFGAKEP. Residues 27-47 form a helical; Signal-anchor for type III membrane protein membrane-spanning segment; it reads WQVATITATTVLGGVWLWTVI. Residues 48–545 are Cytoplasmic-facing; it reads CQDENLYIRG…HSMYYTPSQK (498 aa). Position 342 is an N6-(pyridoxal phosphate)lysine (K342).

This sequence belongs to the group II decarboxylase family. Sphingosine-1-phosphate lyase subfamily. It depends on pyridoxal 5'-phosphate as a cofactor. In terms of tissue distribution, localized to the developing gut primordium during embryogenesis.

The protein localises to the endoplasmic reticulum membrane. The enzyme catalyses sphinganine 1-phosphate = hexadecanal + phosphoethanolamine. The protein operates within lipid metabolism; sphingolipid metabolism. Functionally, cleaves phosphorylated sphingoid bases (PSBs), such as sphingosine-1-phosphate, into fatty aldehydes and phosphoethanolamine. Sphingolipid catabolism is required for normal development including viability, reproduction and muscle development. In Drosophila melanogaster (Fruit fly), this protein is Sphingosine-1-phosphate lyase.